The chain runs to 206 residues: Small ribosomal subunit protein uS4 (206 aa).

Residues 96 to 156 (GRLDNVVYRM…EKSKKQARIK (61 aa)) form the S4 RNA-binding domain.

This sequence belongs to the universal ribosomal protein uS4 family. As to quaternary structure, part of the 30S ribosomal subunit. Contacts protein S5. The interaction surface between S4 and S5 is involved in control of translational fidelity.

In terms of biological role, one of the primary rRNA binding proteins, it binds directly to 16S rRNA where it nucleates assembly of the body of the 30S subunit. Functionally, with S5 and S12 plays an important role in translational accuracy. This Glaesserella parasuis serovar 5 (strain SH0165) (Haemophilus parasuis) protein is Small ribosomal subunit protein uS4.